A 324-amino-acid polypeptide reads, in one-letter code: 3-hydroxyisobutyrate dehydrogenase, mitochondrial (324 aa).

The transit peptide at 1-25 (MSLRVMSPAMLNAWSQTLVRAMSTQ) directs the protein to the mitochondrion. NAD(+)-binding positions include 29–58 (KNIG…HVFD), 92–93 (LP), and Thr121. Lys196 is an active-site residue. Lys271 serves as a coordination point for NAD(+).

This sequence belongs to the HIBADH-related family. 3-hydroxyisobutyrate dehydrogenase subfamily.

It is found in the mitochondrion. The enzyme catalyses 3-hydroxy-2-methylpropanoate + NAD(+) = 2-methyl-3-oxopropanoate + NADH + H(+). Its pathway is amino-acid degradation; L-valine degradation. This is 3-hydroxyisobutyrate dehydrogenase, mitochondrial from Drosophila melanogaster (Fruit fly).